Consider the following 506-residue polypeptide: Dipeptide and tripeptide permease A (506 aa).

Residues 1–36 (MSTANNNSEHPESVSLNAFKQPKAFYLIFSIELWER) lie on the Cytoplasmic side of the membrane. The chain crosses the membrane as a helical span at residues 37 to 57 (FGYYGLQGIMAVYLVKMLGLS). The Periplasmic segment spans residues 58–61 (EADS). The chain crosses the membrane as a helical span at residues 62 to 82 (ITLFSSFSALVYGFVAIGGWL). Residues 83–91 (GDKVLGSKR) lie on the Cytoplasmic side of the membrane. Helical transmembrane passes span 92 to 112 (VIVL…YSGH) and 113 to 133 (EIFW…LFKA). The Cytoplasmic portion of the chain corresponds to 134-155 (NPSSLLSTCYEKDDPRLDGAFT). The helical transmembrane segment at 156–176 (MYYMSVNIGSFLSMLATPWLA) threads the bilayer. The Periplasmic segment spans residues 177-180 (AKYG). The helical transmembrane segment at 181–201 (WSVAFSLSVVGMLITLVNFMV) threads the bilayer. The Cytoplasmic segment spans residues 202 to 222 (CHKWVKQHGSKPDFKPLQVKK). A helical membrane pass occupies residues 223-243 (LLMVLVGVVALVALSSWLLHN). The Periplasmic portion of the chain corresponds to 244–248 (QIIAR). The chain crosses the membrane as a helical span at residues 249–269 (WALAIVSIGIVIVFAKETFAL). Residues 270 to 276 (HGAARRK) lie on the Cytoplasmic side of the membrane. The chain crosses the membrane as a helical span at residues 277-297 (MIVAFLLMLEAVVFFVLYSQM). Residues 298–322 (PTSLNFFAIHNVEHNILGLAFEPEQ) lie on the Periplasmic side of the membrane. A helical membrane pass occupies residues 323 to 343 (YQALNPFWIMLASPILAALYN). Topologically, residues 344-354 (KMGDRLPMPHK) are cytoplasmic. A helical transmembrane segment spans residues 355–375 (FAFGMILCSGAFLVLPWGASF). Residues 376 to 385 (ANEQGIVSVN) lie on the Periplasmic side of the membrane. A helical transmembrane segment spans residues 386 to 406 (WLILSYALQSIGELMISGLGL). At 407-416 (AMVAQLVPQR) the chain is on the cytoplasmic side. Residues 417–437 (LMGFIMGSWFLTTAAAALIAG) form a helical membrane-spanning segment. Topologically, residues 438 to 461 (KVAGLTAVPGDVNDAHASLAIYSH) are periplasmic. Residues 462–482 (VFMQIGIATAVIAILMMLTAP) traverse the membrane as a helical segment. Residues 483–506 (KLHRMTLDTAEDTEKKAQAAAITN) lie on the Cytoplasmic side of the membrane.

It belongs to the major facilitator superfamily. Proton-dependent oligopeptide transporter (POT/PTR) (TC 2.A.17) family. DtpA subfamily.

It localises to the cell inner membrane. In terms of biological role, proton-dependent permease that transports di- and tripeptides. This Serratia proteamaculans (strain 568) protein is Dipeptide and tripeptide permease A.